Reading from the N-terminus, the 991-residue chain is Adhesion G-protein coupled receptor F3 (991 aa).

A signal peptide spans 1 to 20; sequence MSSLALSQLLLAVTLPLLEL. Over 21 to 694 the chain is Extracellular; the sequence is EPTFVPTAQS…ENPTLDLLSQ (674 aa). Residues Asn75, Asn102, Asn118, Asn321, Asn362, Asn484, Asn571, Asn589, Asn630, and Asn660 are each glycosylated (N-linked (GlcNAc...) asparagine). The 166-residue stretch at 519 to 684 folds into the GAIN-B domain; that stretch reads HPFSFSSANV…SILMSQHTVP (166 aa). Disulfide bonds link Cys635/Cys666 and Cys654/Cys668. Residues 635 to 684 are GPS; it reads CVFWDHRVFQGQGGWSDEGCEVHAANASITQCICQHLTAFSILMSQHTVP. Residues 695-715 traverse the membrane as a helical segment; it reads VGTGASVLALLVCLAIYGLVW. Residues 716 to 730 lie on the Cytoplasmic side of the membrane; sequence RVVVRNKVAFFRHTT. Residues 731-751 form a helical membrane-spanning segment; that stretch reads LFNMVICLLVADTCFLGSPFL. The Extracellular segment spans residues 752-757; sequence PSGYHS. Residues 758–778 form a helical membrane-spanning segment; it reads LICLVTAFLCHFFYLATFFWM. Over 779–799 the chain is Cytoplasmic; it reads LAQALVLAHQLLFVFHQLSKH. Residues 800-820 form a helical membrane-spanning segment; that stretch reads VVLSLMVMLGYLCPLGFAGVT. At 821-850 the chain is on the extracellular side; the sequence is LGLYLPQRKYLWEGKCFLNGGGVMLYSFSE. The chain crosses the membrane as a helical span at residues 851–871; sequence PVLAIVGVNGLVLVIAVLKLL. Residues 872 to 892 lie on the Cytoplasmic side of the membrane; that stretch reads RPSLSEGPTVEKRQALVGVLK. The chain crosses the membrane as a helical span at residues 893-913; that stretch reads ALLILTPIFGLTWGLGVATLF. At 914–916 the chain is on the extracellular side; that stretch reads DGS. A helical membrane pass occupies residues 917–937; the sequence is IVSHYAFSILNSLQGVFILVF. Topologically, residues 938-991 are cytoplasmic; the sequence is GCLTDKKVLEALRKRLRGSRSSNSAISMVTNETYTSEHSKERSEPASYEERMTD. The disordered stretch occupies residues 964 to 991; the sequence is SMVTNETYTSEHSKERSEPASYEERMTD. Residues 972–991 show a composition bias toward basic and acidic residues; sequence TSEHSKERSEPASYEERMTD.

It belongs to the G-protein coupled receptor 2 family. Adhesion G-protein coupled receptor (ADGR) subfamily. Heterodimer of 2 chains generated by proteolytic processing; the large extracellular N-terminal fragment and the membrane-bound C-terminal fragment predominantly remain associated and non-covalently linked. Post-translationally, autoproteolytically processed at the GPS region of the GAIN-B domain; this cleavage modulates receptor activity. Expression is restricted to testis and circumvallate papillae.

Its subcellular location is the membrane. In terms of biological role, orphan receptor. The sequence is that of Adhesion G-protein coupled receptor F3 (ADGRF3) from Mus musculus (Mouse).